The chain runs to 603 residues: DNA mismatch repair protein MutL (603 aa).

The protein belongs to the DNA mismatch repair MutL/HexB family.

In terms of biological role, this protein is involved in the repair of mismatches in DNA. It is required for dam-dependent methyl-directed DNA mismatch repair. May act as a 'molecular matchmaker', a protein that promotes the formation of a stable complex between two or more DNA-binding proteins in an ATP-dependent manner without itself being part of a final effector complex. The polypeptide is DNA mismatch repair protein MutL (Rhodopseudomonas palustris (strain BisA53)).